The following is a 147-amino-acid chain: Large ribosomal subunit protein uL15 (147 aa).

A disordered region spans residues 1-54; that stretch reads MRLSDIKPTPGSMKKRTRVGRGIGSGKGKTSGKGHKGQKARGRGKVHPWFEGGQ. A compositionally biased stretch (basic residues) spans 30–46; it reads TSGKGHKGQKARGRGKV.

This sequence belongs to the universal ribosomal protein uL15 family. In terms of assembly, part of the 50S ribosomal subunit.

Binds to the 23S rRNA. The polypeptide is Large ribosomal subunit protein uL15 (Thermosipho melanesiensis (strain DSM 12029 / CIP 104789 / BI429)).